We begin with the raw amino-acid sequence, 221 residues long: MSQQIDPQQIDPELKSGQIKVLLEQYKILKNEIHLTSQKMTGNIRIGLIVLSLIGSYILHSLIKNEITKSVIDNTTDAVMYTISILLIIGLWTNVFSSLSAIARLGGYLIYLEKTINELIGKNLMIYESEFVPKFFTGSAILAYDLPNVLVFGCTSLFVISFLGYKVLVTINTPDFNLILRSFIILILVISTILFLVNLFTILRVNKVKDEIVTFCTKKIK.

4 consecutive transmembrane segments (helical) span residues 41–63, 78–100, 141–163, and 178–200; these read TGNIRIGLIVLSLIGSYILHSLI, AVMYTISILLIIGLWTNVFSSLS, ILAYDLPNVLVFGCTSLFVISFL, and LILRSFIILILVISTILFLVNLF.

It is found in the cell membrane. This is an uncharacterized protein from Archaeoglobus fulgidus (strain ATCC 49558 / DSM 4304 / JCM 9628 / NBRC 100126 / VC-16).